Reading from the N-terminus, the 715-residue chain is Fatty acid oxidation complex subunit alpha (715 aa).

Positions 1-190 (MTTTSAFMLN…KAGLVDDVVP (190 aa)) are enoyl-CoA hydratase. Positions 306–714 (GPLNSVGILG…FWTNGETDQG (409 aa)) are 3-hydroxyacyl-CoA dehydrogenase.

This sequence in the N-terminal section; belongs to the enoyl-CoA hydratase/isomerase family. In the central section; belongs to the 3-hydroxyacyl-CoA dehydrogenase family. In terms of assembly, heterotetramer of two alpha chains (FadJ) and two beta chains (FadI).

It localises to the cytoplasm. It carries out the reaction a (3S)-3-hydroxyacyl-CoA = a (2E)-enoyl-CoA + H2O. It catalyses the reaction a 4-saturated-(3S)-3-hydroxyacyl-CoA = a (3E)-enoyl-CoA + H2O. The catalysed reaction is a (3S)-3-hydroxyacyl-CoA + NAD(+) = a 3-oxoacyl-CoA + NADH + H(+). The enzyme catalyses (3S)-3-hydroxybutanoyl-CoA = (3R)-3-hydroxybutanoyl-CoA. Its pathway is lipid metabolism; fatty acid beta-oxidation. Its function is as follows. Catalyzes the formation of a hydroxyacyl-CoA by addition of water on enoyl-CoA. Also exhibits 3-hydroxyacyl-CoA epimerase and 3-hydroxyacyl-CoA dehydrogenase activities. The protein is Fatty acid oxidation complex subunit alpha of Salmonella paratyphi A (strain ATCC 9150 / SARB42).